An 818-amino-acid polypeptide reads, in one-letter code: MTILYKVEGKEFSKDSVFPHKKVLCSVSARNIVAFSALQSAIFPASHGGDAGDGSLPGAGLAVGASNSHVYVCDIVTPWEYYKVCSSKSLISVLQWSPNGEQLLLGYVGGRVEIWQPRNQSINLWVLQYYATVPSEDIIEAQFFQNGKGVIFNALKKDHTYYAEKFERVEQQRPTLSGFGGVASEGCVLLTSSGLLAAFSLPAIQKTSAAGADGPAHEVVELTPALHSIGISRSFIEHCSMTPSPSGALNIAFSCGWQQQLVQCFKVSLSLEGELGLEQHLAIKSESQTSIFLGPLDGRRISHLKWTRIANEDVIFIAYACPDGAGSQLEQWTLTRRHQSVHALLQGGGGANNKPNEFVQSESWEQVGKVQLNASLADISVTRLSVSTPDSCQVYAILQDNSVQVLEPNSMKQLNHTQFDRLSDASGAVKFVSGDLTPSSQILLIFDSHAQLYAMQAPLPKQGGSGLLLLEYCIVTGCDASDVLLLNLGNLEALVEKLTDNFTRQPSFVRHFYYANFLALKSNICRMQQQEFDNLIILHAISTTFKSLLRPSDLGFQDKGPADNLAIKLAESIPDVDTVMLNLDAKDFTVEPVMLQSLQQLIQWVTDLALNMLHRLPEEVMKTKLSGKRPSYDISRDIVAISSLRELLVMIRIWGLLNTQCLPVYTKTMDNIDVLVILFRLLTRLAQNPAEPDEMLLDECSLLSKQLLIPQPTKFNPTTLLSAQGFAAVKSGQLQFTSMEEPTCLQDMETEEVVFASSVKDGVSNLQLGARPSHIRRCARCGFVFVNNASKVAKTSALKAWFSKWLHCHCGGFWKQVH.

WD repeat units lie at residues 86–125 (SSKS…INLW), 296–342 (LDGR…QSVH), and 615–666 (RLPE…PVYT). The interaction with Dif stretch occupies residues 175–524 (TLSGFGGVAS…ANFLALKSNI (350 aa)).

Belongs to the Mediator complex subunit 16 family. In terms of assembly, component of the Mediator complex. Interacts with Dif.

It localises to the nucleus. Functionally, component of the Mediator complex, a coactivator involved in the regulated transcription of nearly all RNA polymerase II-dependent genes. Mediator functions as a bridge to convey information from gene-specific regulatory proteins to the basal RNA polymerase II transcription machinery. Mediator is recruited to promoters by direct interactions with regulatory proteins and serves as a scaffold for the assembly of a functional preinitiation complex with RNA polymerase II and the general transcription factors. Required for activated transcription of the MtnA, MtnB and MtnD genes. Required for transcriptional activation in response to lipopolysacchardie (LPS). The protein is Mediator of RNA polymerase II transcription subunit 16 (MED16) of Drosophila melanogaster (Fruit fly).